A 410-amino-acid chain; its full sequence is Lissencephaly-1 homolog A (410 aa).

Positions 7 to 39 (QRDELNRAIADYLRSNGYEEAYSVFKKEAELDM) constitute a LisH domain. Residues 56-83 (TSVIRLQKKVMELESKLNEAKEEINIGG) adopt a coiled-coil conformation. WD repeat units lie at residues 106-145 (GHRS…FERT), 148-187 (GHTD…CIRT), 190-229 (GHDH…CVKT), 232-271 (GHRE…CKAE), 274-333 (EHEH…CLMT), 336-375 (GHDN…CTKT), and 378-410 (AHEH…WECR).

It belongs to the WD repeat LIS1/nudF family. In terms of assembly, can self-associate. Component of the cytosolic PAF-AH (I) heterotetrameric enzyme, which is composed of PAFAH1B1 (beta), PAFAH1B2 (alpha2) and PAFAH1B3 (alpha1) subunits. The catalytic activity of the enzyme resides in the alpha1 (PAFAH1B3) and alpha2 (PAFAH1B2) subunits, whereas the beta subunit (PAFAH1B1) has regulatory activity. Trimer formation is not essential for the catalytic activity. Interacts with dynein, dynactin, nde1 and ndel1.

The protein resides in the cytoplasm. It localises to the cytoskeleton. The protein localises to the microtubule organizing center. Its subcellular location is the centrosome. In terms of biological role, regulatory subunit (beta subunit) of the cytosolic type I platelet-activating factor (PAF) acetylhydrolase (PAF-AH (I)), an enzyme that catalyzes the hydrolyze of the acetyl group at the sn-2 position of PAF and its analogs and participates in PAF inactivation. Regulates the PAF-AH (I) activity in a catalytic dimer composition-dependent manner. Positively regulates the activity of the minus-end directed microtubule motor protein dynein. May enhance dynein-mediated microtubule sliding by targeting dynein to the microtubule plus end. Required for several dynein- and microtubule-dependent processes such as the maintenance of Golgi integrity, the peripheral transport of microtubule fragments and the coupling of the nucleus and centrosome. May be required for proliferation of neuronal precursors and neuronal migration. In Danio rerio (Zebrafish), this protein is Lissencephaly-1 homolog A (pafah1b1a).